The sequence spans 428 residues: Glutamate-1-semialdehyde 2,1-aminomutase (428 aa).

At Lys267 the chain carries N6-(pyridoxal phosphate)lysine.

The protein belongs to the class-III pyridoxal-phosphate-dependent aminotransferase family. HemL subfamily. Homodimer. Pyridoxal 5'-phosphate serves as cofactor.

Its subcellular location is the cytoplasm. The enzyme catalyses (S)-4-amino-5-oxopentanoate = 5-aminolevulinate. It participates in porphyrin-containing compound metabolism; protoporphyrin-IX biosynthesis; 5-aminolevulinate from L-glutamyl-tRNA(Glu): step 2/2. It functions in the pathway porphyrin-containing compound metabolism; chlorophyll biosynthesis. The polypeptide is Glutamate-1-semialdehyde 2,1-aminomutase (Prochlorococcus marinus (strain NATL1A)).